The following is a 69-amino-acid chain: DNA gyrase inhibitor YacG (69 aa).

Zn(2+)-binding residues include C7, C10, C26, and C30.

It belongs to the DNA gyrase inhibitor YacG family. As to quaternary structure, interacts with GyrB. It depends on Zn(2+) as a cofactor.

Functionally, inhibits all the catalytic activities of DNA gyrase by preventing its interaction with DNA. Acts by binding directly to the C-terminal domain of GyrB, which probably disrupts DNA binding by the gyrase. The sequence is that of DNA gyrase inhibitor YacG from Shewanella putrefaciens (strain CN-32 / ATCC BAA-453).